A 630-amino-acid polypeptide reads, in one-letter code: Sodium-dependent serotonin transporter (630 aa).

Polar residues-rich tracts occupy residues Met-1–Val-11 and Gln-42–Ala-55. The disordered stretch occupies residues Met-1–Thr-63. The Cytoplasmic segment spans residues Met-1–Asp-87. Tyr-47 is subject to Phosphotyrosine. The helical transmembrane segment at Phe-88 to Asn-112 threads the bilayer. Na(+)-binding residues include Gly-94, Ala-96, Val-97, Asp-98, and Asn-101. A serotonin-binding site is contributed by Asp-98. At Gly-113–Gly-115 the chain is on the extracellular side. Residues Ala-116 to Met-135 form a helical membrane-spanning segment. The Cytoplasmic portion of the chain corresponds to Glu-136–Gly-160. At Tyr-142 the chain carries Phosphotyrosine. Residues Ile-161–Tyr-186 traverse the membrane as a helical segment. The Extracellular portion of the chain corresponds to Leu-187 to Ser-252. Cys-200 and Cys-209 are joined by a disulfide. Residues Asn-208 and Asn-217 are each glycosylated (N-linked (GlcNAc...) asparagine). Residues Trp-253 to Trp-271 form a helical membrane-spanning segment. Over Lys-272–Ser-277 the chain is Cytoplasmic. At Thr-276 the chain carries Phosphothreonine. Residues Gly-278–Val-297 traverse the membrane as a helical segment. Over Arg-298–Gly-324 the chain is Extracellular. The helical transmembrane segment at Val-325–Phe-347 threads the bilayer. Ser-336 provides a ligand contact to Na(+). The Cytoplasmic segment spans residues Ala-348–Asp-360. The helical transmembrane segment at Ala-361–Phe-380 threads the bilayer. Asn-368 is a Na(+) binding site. The Extracellular segment spans residues Thr-381–Thr-421. A helical transmembrane segment spans residues Phe-422 to Leu-443. Na(+) is bound by residues Leu-434, Asp-437, and Ser-438. Thr-439 is a binding site for serotonin. Over Glu-444–Glu-463 the chain is Cytoplasmic. A helical membrane pass occupies residues Trp-464–Ser-483. Over Gly-484–Glu-494 the chain is Extracellular. Positions 494 and 495 each coordinate serotonin. The helical transmembrane segment at Tyr-495 to Tyr-516 threads the bilayer. Topologically, residues Gly-517–Arg-538 are cytoplasmic. Residues Ile-539–Met-558 form a helical membrane-spanning segment. Phe-556 and Ser-559 together coordinate serotonin. At Ser-559–Ser-574 the chain is on the extracellular side. The helical transmembrane segment at Ile-575–Tyr-595 threads the bilayer. Topologically, residues Arg-596 to Val-630 are cytoplasmic. Positions Thr-616–Asp-624 are interaction with RAB4A.

The protein belongs to the sodium:neurotransmitter symporter (SNF) (TC 2.A.22) family. SLC6A4 subfamily. As to quaternary structure, monomer or homooligomer. Interacts (via C-terminus) with SCAMP2; the interaction is direct and retains transporter molecules intracellularly. Interacts with filamentous actin and STX1A. Interacts (via the N-terminus) with STX1A (via the H3 domain); this interaction regulates SLC4A6 channel conductance. Interacts with SEC23A, SEC24C and PATJ. Interacts with NOS1; the interaction may diminish the cell surface localization of SERT in the brain and, correspondingly, reduce serotonin reuptake. Interacts with TGFB1I1. Interacts with ITGAV:ITGB3. Interacts (via C-terminus) with ITGB3; this interaction regulates SLC6A4 trafficking. Post-translationally, phosphorylation at Thr-276 increases 5-HT uptake and is required for cGMP-mediated SERT regulation. In terms of tissue distribution, expressed in the lung, midbrain and brainstem regions. Expressed in brainstem raphe neurons.

It is found in the cell membrane. Its subcellular location is the endomembrane system. It localises to the endosome membrane. The protein localises to the synapse. The protein resides in the cell junction. It is found in the focal adhesion. Its subcellular location is the cell projection. It localises to the neuron projection. It catalyses the reaction serotonin(out) + K(+)(in) + Na(+)(out) + H(+)(in) = serotonin(in) + K(+)(out) + Na(+)(in) + H(+)(out). Serotonin transporter that cotransports serotonin with one Na(+) ion in exchange for one K(+) ion and possibly one proton in an overall electroneutral transport cycle. Transports serotonin across the plasma membrane from the extracellular compartment to the cytosol thus limiting serotonin intercellular signaling. Essential for serotonin homeostasis in the central nervous system. In the developing somatosensory cortex, acts in glutamatergic neurons to control serotonin uptake and its trophic functions accounting for proper spatial organization of cortical neurons and elaboration of sensory circuits. In the mature cortex, acts primarily in brainstem raphe neurons to mediate serotonin uptake from the synaptic cleft back into the pre-synaptic terminal thus terminating serotonin signaling at the synapse. Modulates mucosal serotonin levels in the gastrointestinal tract through uptake and clearance of serotonin in enterocytes. Required for enteric neurogenesis and gastrointestinal reflexes. Regulates blood serotonin levels by ensuring rapid high affinity uptake of serotonin from plasma to platelets, where it is further stored in dense granules via vesicular monoamine transporters and then released upon stimulation. Mechanistically, the transport cycle starts with an outward-open conformation having Na1(+) and Cl(-) sites occupied. The binding of a second extracellular Na2(+) ion and serotonin substrate leads to structural changes to outward-occluded to inward-occluded to inward-open, where the Na2(+) ion and serotonin are released into the cytosol. Binding of intracellular K(+) ion induces conformational transitions to inward-occluded to outward-open and completes the cycle by releasing K(+) possibly together with a proton bound to Asp-98 into the extracellular compartment. Na1(+) and Cl(-) ions remain bound throughout the transport cycle. Additionally, displays serotonin-induced channel-like conductance for monovalent cations, mainly Na(+) ions. The channel activity is uncoupled from the transport cycle and may contribute to the membrane resting potential or excitability. This is Sodium-dependent serotonin transporter from Mus musculus (Mouse).